The chain runs to 119 residues: MAFKDTGKTPVEPEVAIHRIRITLTSRNVKSLEKVCADLIRGAKEKNLKVKGPVRMPTKTLRITTGKTPCGEGSKTWDRFQMRIHKRLIDLHSPSEIVKQITSISIEPGVEVEVTIADA.

The residue at position 2 (A2) is an N-acetylalanine. K4 is covalently cross-linked (Glycyl lysine isopeptide (Lys-Gly) (interchain with G-Cter in ubiquitin)). Residue K8 is modified to N6-succinyllysine; alternate. K8 participates in a covalent cross-link: Glycyl lysine isopeptide (Lys-Gly) (interchain with G-Cter in ubiquitin); alternate. T9 carries the phosphothreonine modification. 2 positions are modified to N6-acetyllysine: K34 and K75. S93 carries the post-translational modification Phosphoserine.

It belongs to the universal ribosomal protein uS10 family. In terms of assembly, component of the 40S small ribosomal subunit. In terms of processing, polyubiquitinated by ZNF598 via 'Lys-63'-linked ubiquitin chains when a ribosome has stalled, initiating the ribosome quality control (RQC) pathway to degrade the potentially detrimental aberrant nascent polypeptide. Deubiquitinated by OTUD3 and USP21, antagonizing ZNF598 activity. Post-translationally, ufmylated by UFL1.

It is found in the cytoplasm. Component of the small ribosomal subunit. The ribosome is a large ribonucleoprotein complex responsible for the synthesis of proteins in the cell. In Pongo abelii (Sumatran orangutan), this protein is Small ribosomal subunit protein uS10 (RPS20).